A 563-amino-acid polypeptide reads, in one-letter code: Arginine--tRNA ligase (563 aa).

Residues 121–131 carry the 'HIGH' region motif; it reads PNIAKPFSIGH.

This sequence belongs to the class-I aminoacyl-tRNA synthetase family. Monomer.

The protein resides in the cytoplasm. The enzyme catalyses tRNA(Arg) + L-arginine + ATP = L-arginyl-tRNA(Arg) + AMP + diphosphate. The protein is Arginine--tRNA ligase of Streptococcus pneumoniae (strain P1031).